The primary structure comprises 468 residues: Cytochrome P450-like protein L532 (468 aa).

The next 2 helical transmembrane spans lie at W22–I42 and V172–V192. C415 contacts heme.

This sequence belongs to the cytochrome P450 family. It depends on heme as a cofactor.

The protein resides in the host membrane. The protein localises to the virion. This is Cytochrome P450-like protein L532 from Acanthamoeba polyphaga mimivirus (APMV).